The chain runs to 116 residues: Beta-2-microglobulin (116 aa).

An N-terminal signal peptide occupies residues 1–19 (MRAIITFALFCVLYITVQA). Residues 24 to 111 (PKVQVYSHFP…RHMSNTNAYS (88 aa)) form the Ig-like C1-type domain. Cysteine 44 and cysteine 99 form a disulfide bridge.

The protein belongs to the beta-2-microglobulin family. As to quaternary structure, heterodimer of an alpha chain and a beta chain. Beta-2-microglobulin is the beta-chain of major histocompatibility complex class I molecules.

It is found in the secreted. Component of the class I major histocompatibility complex (MHC). Involved in the presentation of peptide antigens to the immune system. In Labeobarbus intermedius (Lake tana barbels), this protein is Beta-2-microglobulin (b2m).